The sequence spans 369 residues: Lipoyl synthase, mitochondrial (369 aa).

Residues 1 to 32 constitute a mitochondrion transit peptide; sequence MLTKGVRALAWSPRRYITLDAEAAKPVVAKRR. Residues cysteine 106, cysteine 111, cysteine 117, cysteine 136, cysteine 140, cysteine 143, and serine 351 each coordinate [4Fe-4S] cluster. Residues 121 to 340 form the Radical SAM core domain; that stretch reads NKGSATATIM…KEKALELGFL (220 aa).

This sequence belongs to the radical SAM superfamily. Lipoyl synthase family. [4Fe-4S] cluster serves as cofactor.

It localises to the mitochondrion. The enzyme catalyses [[Fe-S] cluster scaffold protein carrying a second [4Fe-4S](2+) cluster] + N(6)-octanoyl-L-lysyl-[protein] + 2 oxidized [2Fe-2S]-[ferredoxin] + 2 S-adenosyl-L-methionine + 4 H(+) = [[Fe-S] cluster scaffold protein] + N(6)-[(R)-dihydrolipoyl]-L-lysyl-[protein] + 4 Fe(3+) + 2 hydrogen sulfide + 2 5'-deoxyadenosine + 2 L-methionine + 2 reduced [2Fe-2S]-[ferredoxin]. It participates in protein modification; protein lipoylation via endogenous pathway; protein N(6)-(lipoyl)lysine from octanoyl-[acyl-carrier-protein]: step 2/2. Catalyzes the radical-mediated insertion of two sulfur atoms into the C-6 and C-8 positions of the octanoyl moiety bound to the lipoyl domains of lipoate-dependent enzymes, thereby converting the octanoylated domains into lipoylated derivatives. The chain is Lipoyl synthase, mitochondrial from Eremothecium gossypii (strain ATCC 10895 / CBS 109.51 / FGSC 9923 / NRRL Y-1056) (Yeast).